The primary structure comprises 429 residues: Adenylosuccinate synthetase (429 aa).

GTP is bound by residues 12 to 18 (GDEGKGK) and 40 to 42 (GHT). The active-site Proton acceptor is Asp13. Residues Asp13 and Gly40 each contribute to the Mg(2+) site. Residues 13–16 (DEGK), 38–41 (NAGH), Thr128, Arg142, Gln223, Thr238, and Arg302 each bind IMP. His41 (proton donor) is an active-site residue. 298–304 (TVTGRPR) is a binding site for substrate. Residues Arg304, 330–332 (LLD), and 412–414 (SVG) each bind GTP.

This sequence belongs to the adenylosuccinate synthetase family. As to quaternary structure, homodimer. Mg(2+) serves as cofactor.

It is found in the cytoplasm. It catalyses the reaction IMP + L-aspartate + GTP = N(6)-(1,2-dicarboxyethyl)-AMP + GDP + phosphate + 2 H(+). It functions in the pathway purine metabolism; AMP biosynthesis via de novo pathway; AMP from IMP: step 1/2. Functionally, plays an important role in the de novo pathway of purine nucleotide biosynthesis. Catalyzes the first committed step in the biosynthesis of AMP from IMP. The protein is Adenylosuccinate synthetase of Lactobacillus gasseri (strain ATCC 33323 / DSM 20243 / BCRC 14619 / CIP 102991 / JCM 1131 / KCTC 3163 / NCIMB 11718 / NCTC 13722 / AM63).